Here is a 179-residue protein sequence, read N- to C-terminus: NADH dehydrogenase [ubiquinone] 1 beta subcomplex subunit 9 (179 aa).

Residue A2 is modified to N-acetylalanine. The residue at position 85 (S85) is a Phosphoserine. The tract at residues 136–162 is disordered; it reads EVKQLQEETPPGGPLTEALPPARKEGD.

It belongs to the complex I LYR family. Mammalian complex I is composed of 45 different subunits.

It localises to the mitochondrion inner membrane. Its function is as follows. Accessory subunit of the mitochondrial membrane respiratory chain NADH dehydrogenase (Complex I), that is believed to be not involved in catalysis. Complex I functions in the transfer of electrons from NADH to the respiratory chain. The immediate electron acceptor for the enzyme is believed to be ubiquinone. The sequence is that of NADH dehydrogenase [ubiquinone] 1 beta subcomplex subunit 9 (NDUFB9) from Homo sapiens (Human).